We begin with the raw amino-acid sequence, 171 residues long: RNA silencing suppressor p19 (171 aa).

Positions 1–15 are enriched in basic and acidic residues; the sequence is MERAIPGNDTREPAY. The tract at residues 1–32 is disordered; that stretch reads MERAIPGNDTREPAYGERWNGGPGGSTSPFQL.

Belongs to the tombusvirus protein p19 family. As to quaternary structure, homodimer.

In terms of biological role, viral suppressor of RNA silencing which binds specifically to silencing RNAs (siRNAs). Acts as a molecular caliper to specifically select siRNAs based on the length of the duplex region of the RNA. This is RNA silencing suppressor p19 from Capsicum annuum (Capsicum pepper).